The following is a 301-amino-acid chain: Probable alpha-L-glutamate ligase 1 (301 aa).

One can recognise an ATP-grasp domain in the interval L104–E287. ATP-binding positions include K141, E178 to Y179, D187, and R211 to N213. Positions 248, 260, and 262 each coordinate Mg(2+). Mn(2+)-binding residues include D248, E260, and N262.

It belongs to the RimK family. The cofactor is Mg(2+). It depends on Mn(2+) as a cofactor.

The polypeptide is Probable alpha-L-glutamate ligase 1 (Shewanella baltica (strain OS155 / ATCC BAA-1091)).